Reading from the N-terminus, the 325-residue chain is Bifunctional nuclease 1 (325 aa).

Positions 117 to 252 (CVHNNPQGGH…YLAYSDGMRV (136 aa)) constitute a BFN domain. A UVR domain is found at 284–318 (TKEFNILSKMMQAVDEERYDEAAEWRDKLGQFRAK).

This sequence belongs to the bifunctional nuclease family.

The protein resides in the nucleus. Bifunctional nuclease with both RNase and DNase activities. Involved in basal defense response. Participates in abscisic acid-derived callose deposition following infection by a necrotrophic pathogen. The sequence is that of Bifunctional nuclease 1 (BBD1) from Arabidopsis thaliana (Mouse-ear cress).